The following is a 460-amino-acid chain: Polygalacturonase (460 aa).

A signal peptide spans 1 to 26; that stretch reads MALKTQLLWSFVVVFVVSFSTTSCSG. Residue asparagine 280 is glycosylated (N-linked (GlcNAc...) asparagine). Residue aspartate 292 is the Proton donor of the active site. Histidine 315 is a catalytic residue. Asparagine 421 is a glycosylation site (N-linked (GlcNAc...) asparagine).

This sequence belongs to the glycosyl hydrolase 28 family.

It localises to the secreted. Its subcellular location is the cell wall. It catalyses the reaction (1,4-alpha-D-galacturonosyl)n+m + H2O = (1,4-alpha-D-galacturonosyl)n + (1,4-alpha-D-galacturonosyl)m.. Acts in concert with the pectinesterase, in the ripening process. Is involved in cell wall metabolism, specifically in polyuronide degradation. The chain is Polygalacturonase from Malus domestica (Apple).